A 478-amino-acid chain; its full sequence is MEKPAELVLIPSPGIGHLVSTLEIAKLLVSRDDKLFITVLIMHFPAVSKGTDAYVQSLADSSSPISQRINFINLPHTNMDHTEGSVRNSLVGFVESQQPHVKDAVANLRDSKTTRLAGFVVDMFCTTMINVANQLGVPSYVFFTSGAATLGLLFHLQELRDQYNKDCTEFKDSDAELIIPSFFNPLPAKVLPGRMLVKDSAEPFLNVIKRFRETKGILVNTFTDLESHALHALSSDAEIPPVYPVGPLLNLNSNESRVDSDEVKKKNDILKWLDDQPPLSVVFLCFGSMGSFDESQVREIANALEHAGHRFLWSLRRSPPTGKVAFPSDYDDHTGVLPEGFLDRTGGIGKVIGWAPQVAVLAHPSVGGFVSHCGWNSTLESLWHGVPVATWPLYAEQQLNAFQPVKELELAVEIDMSYRSKSPVLVSAKEIERGIREVMELDSSDIRKRVKEMSEKGKKALMDGGSSYTSLGHFIDQI.

This sequence belongs to the UDP-glycosyltransferase family.

The sequence is that of Putative UDP-glucose flavonoid 3-O-glucosyltransferase 3 from Fragaria ananassa (Strawberry).